A 282-amino-acid chain; its full sequence is MEMO1 family protein Msed_2139 (282 aa).

Belongs to the MEMO1 family.

This is MEMO1 family protein Msed_2139 from Metallosphaera sedula (strain ATCC 51363 / DSM 5348 / JCM 9185 / NBRC 15509 / TH2).